The chain runs to 107 residues: UPF0235 protein RPC_0058 (107 aa).

The protein belongs to the UPF0235 family.

This Rhodopseudomonas palustris (strain BisB18) protein is UPF0235 protein RPC_0058.